The chain runs to 147 residues: Large ribosomal subunit protein uL13 (147 aa).

The protein belongs to the universal ribosomal protein uL13 family. Part of the 50S ribosomal subunit.

Its function is as follows. This protein is one of the early assembly proteins of the 50S ribosomal subunit, although it is not seen to bind rRNA by itself. It is important during the early stages of 50S assembly. This is Large ribosomal subunit protein uL13 from Pediococcus pentosaceus (strain ATCC 25745 / CCUG 21536 / LMG 10740 / 183-1w).